The sequence spans 595 residues: Solute carrier family 13 member 1 (595 aa).

Transmembrane regions (helical) follow at residues phenylalanine 13 to lysine 33, leucine 41 to leucine 61, valine 77 to threonine 97, isoleucine 108 to methionine 128, and threonine 131 to alanine 151. N-linked (GlcNAc...) asparagine glycans are attached at residues asparagine 174 and asparagine 207. 8 consecutive transmembrane segments (helical) span residues leucine 239–threonine 259, proline 290–phenylalanine 310, isoleucine 348–phenylalanine 368, glycine 381–alanine 401, proline 464–leucine 484, proline 491–asparagine 511, proline 512–alanine 532, and glycine 554–valine 574. A glycan (N-linked (GlcNAc...) asparagine) is linked at asparagine 591.

It belongs to the SLC13A/DASS transporter (TC 2.A.47) family. NADC subfamily. Highly expressed in kidney; not detectable in the other tissues tested.

It is found in the apical cell membrane. It catalyses the reaction sulfate(out) + 3 Na(+)(out) = sulfate(in) + 3 Na(+)(in). The catalysed reaction is selenate(out) + 3 Na(+)(out) = selenate(in) + 3 Na(+)(in). The enzyme catalyses thiosulfate(out) + 3 Na(+)(out) = thiosulfate(in) + 3 Na(+)(in). With respect to regulation, inhibited by thiosulfate, selenate, molybdate, tungstate, citrate and succinate. Sodium:sulfate symporter that mediates sulfate reabsorption in the kidney and small intestine. Can also mediate the transport of selenate and thiosulfate. In Homo sapiens (Human), this protein is Solute carrier family 13 member 1 (SLC13A1).